Here is an 87-residue protein sequence, read N- to C-terminus: Acyl-CoA-binding protein (87 aa).

Ser2 is subject to N-acetylserine. The ACB domain occupies Ser2–Ile87. Lys8 carries the post-translational modification N6-acetyllysine; alternate. Lys8 carries the post-translational modification N6-succinyllysine; alternate. Residue Lys14 participates in an acyl-CoA binding. Lys17 bears the N6-succinyllysine mark. At Lys19 the chain carries N6-acetyllysine. Phosphotyrosine is present on Tyr29. Residues Tyr29 to Lys33, Lys51, Lys55, and Tyr74 contribute to the an acyl-CoA site. Lys51 carries the post-translational modification N6-acetyllysine. N6-acetyllysine; alternate is present on Lys55. At Lys55 the chain carries N6-succinyllysine; alternate. Position 55 is an N6-(2-hydroxyisobutyryl)lysine; alternate (Lys55). Lys55 is subject to N6-malonyllysine; alternate. Lys77 bears the N6-acetyllysine; alternate mark. Lys77 carries the N6-succinyllysine; alternate modification.

It belongs to the ACBP family. In terms of assembly, monomer.

It localises to the endoplasmic reticulum. The protein localises to the golgi apparatus. Its function is as follows. Binds medium- and long-chain acyl-CoA esters with very high affinity and may function as an intracellular carrier of acyl-CoA esters. It is also able to displace diazepam from the benzodiazepine (BZD) recognition site located on the GABA type A receptor. It is therefore possible that this protein also acts as a neuropeptide to modulate the action of the GABA receptor. The protein is Acyl-CoA-binding protein (DBI) of Bos taurus (Bovine).